Here is a 249-residue protein sequence, read N- to C-terminus: MHTLVLLRHGQSAWNLENRFTGWTDVDLSPEGEQEARDAARLLTDEGLTFDVCHTSVLTRAIRTLYIVQHEMGLSWLPVHKHWRLNERHYGGLQGLDKAETAARFGEEQVFEWRRSYDTPPPPLPADDPRSPAGDARYAGLAPDVLPASESLKETVARVLPYWHDVIAPQVLAGQRVLVAAHGNSLRALVMHLDGMTPEAVTKLNIPTGLPLVYTLDGTLRPLAHRYLGDPAVAEAKAKAVAAQGAARK.

Residues 8-15 (RHGQSAWN), 21-22 (TG), arginine 60, 87-90 (ERHY), lysine 98, 114-115 (RR), and 183-184 (GN) contribute to the substrate site. Catalysis depends on histidine 9, which acts as the Tele-phosphohistidine intermediate. Glutamate 87 functions as the Proton donor/acceptor in the catalytic mechanism. A disordered region spans residues 115-137 (RSYDTPPPPLPADDPRSPAGDAR).

Belongs to the phosphoglycerate mutase family. BPG-dependent PGAM subfamily. As to quaternary structure, homodimer.

It carries out the reaction (2R)-2-phosphoglycerate = (2R)-3-phosphoglycerate. It participates in carbohydrate degradation; glycolysis; pyruvate from D-glyceraldehyde 3-phosphate: step 3/5. Its function is as follows. Catalyzes the interconversion of 2-phosphoglycerate and 3-phosphoglycerate. This Nitratidesulfovibrio vulgaris (strain DSM 19637 / Miyazaki F) (Desulfovibrio vulgaris) protein is 2,3-bisphosphoglycerate-dependent phosphoglycerate mutase.